Consider the following 129-residue polypeptide: SOSS complex subunit C homolog (129 aa).

Positions 105–129 are disordered; it reads RLEPLPSPATTPTTPNAPPSHSISK.

Belongs to the SOSS-C family.

The chain is SOSS complex subunit C homolog from Drosophila simulans (Fruit fly).